We begin with the raw amino-acid sequence, 195 residues long: Imidazoleglycerol-phosphate dehydratase (195 aa).

It belongs to the imidazoleglycerol-phosphate dehydratase family.

It is found in the cytoplasm. The catalysed reaction is D-erythro-1-(imidazol-4-yl)glycerol 3-phosphate = 3-(imidazol-4-yl)-2-oxopropyl phosphate + H2O. The protein operates within amino-acid biosynthesis; L-histidine biosynthesis; L-histidine from 5-phospho-alpha-D-ribose 1-diphosphate: step 6/9. The sequence is that of Imidazoleglycerol-phosphate dehydratase from Paraburkholderia phymatum (strain DSM 17167 / CIP 108236 / LMG 21445 / STM815) (Burkholderia phymatum).